Here is a 312-residue protein sequence, read N- to C-terminus: Pre-mRNA-splicing factor 38A (312 aa).

Residues 1-179 (MANRTVKDAH…VLEETEQLDP (179 aa)) are N-terminal protein interaction domain. A disordered region spans residues 180–312 (RVSALEEDMD…SHKKSRRGNE (133 aa)). Over residues 184–201 (LEEDMDDVESSEEEEDDD) the composition is skewed to acidic residues. Residues 202 to 223 (EKGRDPSPEHHRRNYRDLDRPR) show a composition bias toward basic and acidic residues. 2 stretches are compositionally biased toward basic residues: residues 224–294 (RSPS…RSHS) and 301–312 (KKSHKKSRRGNE).

The protein belongs to the PRP38 family. As to quaternary structure, component of the spliceosome B complex.

The protein resides in the nucleus. Involved in pre-mRNA splicing as a component of the spliceosome. The sequence is that of Pre-mRNA-splicing factor 38A (prpf38a) from Xenopus laevis (African clawed frog).